The primary structure comprises 433 residues: C2H2 type master regulator of conidiophore development brlA (433 aa).

Disordered stretches follow at residues 24-49 (SDCP…LYSQ), 240-269 (KSHT…ISGH), and 286-306 (MMQR…LRSN). Residues 30–49 (TSSFSPLDSPTPTPTSLYSQ) are compositionally biased toward low complexity. Over residues 240–264 (KSHTPSTPHRSVSMGTPSGSDTPVS) the composition is skewed to polar residues. A compositionally biased stretch (basic residues) spans 288 to 302 (QRHRQPSRKPSKKQL). 2 C2H2-type zinc fingers span residues 321–345 (FKCK…MKSH) and 351–376 (HVCW…TKTH). The tract at residues 391-423 (ETSQDFDPDFRGQLTPDGRPIYGSKLEDSMPDC) is disordered.

The protein resides in the nucleus. BrlA, abaA and wetA are pivotal regulators of conidiophore development and conidium maturation. They act individually and together to regulate their own expression and that of numerous other sporulation-specific genes. Binds promoters of target genes at brlA response elements (BREs) containing the conserved sequence 5'-(C/A)(A/G)AGGG(G/A)-3'. Regulates genes involved in conidiogenesis. The protein is C2H2 type master regulator of conidiophore development brlA of Penicillium digitatum (strain PHI26 / CECT 20796) (Green mold).